A 210-amino-acid chain; its full sequence is Ribosomal RNA large subunit methyltransferase E (210 aa).

S-adenosyl-L-methionine is bound by residues G61, W63, D81, D97, and D122. Residue K162 is the Proton acceptor of the active site. Residues 187 to 196 (KPEASRKRSP) show a composition bias toward basic and acidic residues. A disordered region spans residues 187 to 210 (KPEASRKRSPEVYALGQGKRAHMK).

Belongs to the class I-like SAM-binding methyltransferase superfamily. RNA methyltransferase RlmE family.

Its subcellular location is the cytoplasm. It catalyses the reaction uridine(2552) in 23S rRNA + S-adenosyl-L-methionine = 2'-O-methyluridine(2552) in 23S rRNA + S-adenosyl-L-homocysteine + H(+). In terms of biological role, specifically methylates the uridine in position 2552 of 23S rRNA at the 2'-O position of the ribose in the fully assembled 50S ribosomal subunit. The polypeptide is Ribosomal RNA large subunit methyltransferase E (Stenotrophomonas maltophilia (strain R551-3)).